Here is a 348-residue protein sequence, read N- to C-terminus: Erlin-1 (348 aa).

Residues 1 to 7 are Cytoplasmic-facing; the sequence is MNMTQAR. Residues 8–28 form a helical membrane-spanning segment; it reads LLVAAVVGLVAILLYASIHKI. The Lumenal segment spans residues 29-348; it reads EEGHLAVYYR…SPIQNKENAG (320 aa). Residue Asn-108 is glycosylated (N-linked (GlcNAc...) asparagine). Residue Lys-269 is modified to N6-acetyllysine. The segment covering 318–336 has biased composition (basic and acidic residues); sequence DGRTGREDSLPPEEAREPS. Residues 318-348 form a disordered region; sequence DGRTGREDSLPPEEAREPSGESPIQNKENAG. Residues 339-348 show a composition bias toward polar residues; the sequence is SPIQNKENAG.

This sequence belongs to the band 7/mec-2 family. As to quaternary structure, forms a heteromeric complex with ERLIN2. In complex with ERLIN2, interacts with RNF170. Interacts with AMFR and SYVN1. In terms of processing, deubiquitinated by USP25; leading to stabilization.

The protein localises to the endoplasmic reticulum membrane. Functionally, component of the ERLIN1/ERLIN2 complex which mediates the endoplasmic reticulum-associated degradation (ERAD) of inositol 1,4,5-trisphosphate receptors (IP3Rs). Involved in regulation of cellular cholesterol homeostasis by regulation the SREBP signaling pathway. Binds cholesterol and may promote ER retention of the SCAP-SREBF complex. This is Erlin-1 from Mus musculus (Mouse).